A 721-amino-acid chain; its full sequence is DNA ligase (721 aa).

NAD(+) contacts are provided by residues aspartate 39 to aspartate 43, serine 89 to leucine 90, and glutamate 123. The active-site N6-AMP-lysine intermediate is lysine 125. Residues arginine 146, glutamate 186, lysine 302, and lysine 326 each coordinate NAD(+). Zn(2+)-binding residues include cysteine 418, cysteine 421, cysteine 436, and cysteine 442. A disordered region spans residues glutamine 556–glutamate 588. The BRCT domain occupies threonine 641–glycine 721.

This sequence belongs to the NAD-dependent DNA ligase family. LigA subfamily. It depends on Mg(2+) as a cofactor. Requires Mn(2+) as cofactor.

The enzyme catalyses NAD(+) + (deoxyribonucleotide)n-3'-hydroxyl + 5'-phospho-(deoxyribonucleotide)m = (deoxyribonucleotide)n+m + AMP + beta-nicotinamide D-nucleotide.. Its function is as follows. DNA ligase that catalyzes the formation of phosphodiester linkages between 5'-phosphoryl and 3'-hydroxyl groups in double-stranded DNA using NAD as a coenzyme and as the energy source for the reaction. It is essential for DNA replication and repair of damaged DNA. This Novosphingobium aromaticivorans (strain ATCC 700278 / DSM 12444 / CCUG 56034 / CIP 105152 / NBRC 16084 / F199) protein is DNA ligase.